Reading from the N-terminus, the 430-residue chain is Adenylosuccinate synthetase (430 aa).

GTP is bound by residues 13–19 (GDEGKGK) and 41–43 (GHT). D14 serves as the catalytic Proton acceptor. Mg(2+) is bound by residues D14 and G41. Residues 14 to 17 (DEGK), 39 to 42 (NAGH), T130, R144, Q225, T240, and R304 each bind IMP. The active-site Proton donor is the H42. 300 to 306 (STTGRAR) contributes to the substrate binding site. GTP contacts are provided by residues R306, 332 to 334 (KLD), and 414 to 416 (STG).

The protein belongs to the adenylosuccinate synthetase family. In terms of assembly, homodimer. It depends on Mg(2+) as a cofactor.

Its subcellular location is the cytoplasm. The enzyme catalyses IMP + L-aspartate + GTP = N(6)-(1,2-dicarboxyethyl)-AMP + GDP + phosphate + 2 H(+). Its pathway is purine metabolism; AMP biosynthesis via de novo pathway; AMP from IMP: step 1/2. Its function is as follows. Plays an important role in the de novo pathway of purine nucleotide biosynthesis. Catalyzes the first committed step in the biosynthesis of AMP from IMP. In Pseudomonas putida (strain ATCC 700007 / DSM 6899 / JCM 31910 / BCRC 17059 / LMG 24140 / F1), this protein is Adenylosuccinate synthetase.